The primary structure comprises 294 residues: Mating type protein mtA-1 (294 aa).

Positions 46-101 (TAKKKVNGFMGFRSNYSPLFSYLPQKMRSPFMTILWQYDPYHNEWDFMCSVYSSIR) form a DNA-binding region, alpha box.

Belongs to the MATALPHA1 family.

Its subcellular location is the nucleus. In terms of biological role, mating type proteins are sequence specific DNA-binding proteins that act as master switches in fungal differentiation by controlling gene expression in a cell type-specific fashion. Transcriptional activator that induces the transcription of alpha-specific genes. The chain is Mating type protein mtA-1 (MTA1) from Sordaria equina.